A 415-amino-acid polypeptide reads, in one-letter code: Interleukin-5 receptor subunit alpha (415 aa).

Residues 1-17 (MVPVLLILVGALATLQA) form the signal peptide. At 18–339 (DLLNHKKFLL…KERKSLVEWH (322 aa)) the chain is on the extracellular side. In terms of domain architecture, Fibronectin type-III 1 spans 29 to 120 (PPVNFTIKAT…VSAELKAPPG (92 aa)). N-linked (GlcNAc...) asparagine glycosylation is found at N32 and N128. 2 cysteine pairs are disulfide-bonded: C131/C152 and C179/C193. 2 N-linked (GlcNAc...) asparagine glycosylation sites follow: N213 and N241. Residues 238–331 (PPRNVTVEIE…WSQPIYVGKE (94 aa)) enclose the Fibronectin type-III 2 domain. C266 and C313 are disulfide-bonded. The short motif at 319 to 323 (WGEWS) is the WSXWS motif element. A helical transmembrane segment spans residues 340-361 (LIVLPTAACFVLLIFSLICRVC). Residues 362–415 (HLWTRLFPPVPAPKSNIKDLPVVTEYEKPSNETKIEVVHCVEEVGFEVMGNSTF) are Cytoplasmic-facing. Residues 367 to 375 (LFPPVPAPK) carry the Box 1 motif motif.

As to quaternary structure, interacts with IL5. Interacts with CSF2RB. Interacts with JAK2. Interacts with SDCBP. In terms of tissue distribution, expressed on eosinophils and basophils. Also on B-cells.

It localises to the membrane. Functionally, cell surface receptor that plays an important role in the survival, differentiation, and chemotaxis of eosinophils. Acts by forming a heterodimeric receptor with CSF2RB subunit and subsequently binding to interleukin-5. In unstimulated conditions, interacts constitutively with JAK2. Heterodimeric receptor activation leads to JAK2 stimulation and subsequent activation of the JAK-STAT pathway. This chain is Interleukin-5 receptor subunit alpha (Il5ra), found in Mus musculus (Mouse).